The sequence spans 446 residues: C4-dicarboxylate transport protein 2 (446 aa).

The next 10 helical transmembrane spans lie at proline 7–alanine 26, methionine 46–glycine 64, valine 77–glycine 99, isoleucine 152–glutamate 171, alanine 192–glycine 211, leucine 221–isoleucine 243, valine 291–leucine 313, isoleucine 318–isoleucine 340, isoleucine 353–leucine 375, and isoleucine 381–tryptophan 403.

It belongs to the dicarboxylate/amino acid:cation symporter (DAACS) (TC 2.A.23) family.

Its subcellular location is the cell inner membrane. In terms of biological role, responsible for the transport of dicarboxylates such as succinate, fumarate, and malate from the periplasm across the membrane. The protein is C4-dicarboxylate transport protein 2 (dctA2) of Ralstonia nicotianae (strain ATCC BAA-1114 / GMI1000) (Ralstonia solanacearum).